A 743-amino-acid chain; its full sequence is Extensin-2 (743 aa).

The first 22 residues, 1-22 (MGPSAHLISALGVIIMATMVAA), serve as a signal peptide directing secretion. Positions 46 to 93 (TPPLPYVDSSPPPTYTPAPEVEYKSPPPPYVYSSPPPPTYSPSPKVDY) are disordered. 2 stretches are compositionally biased toward pro residues: residues 47–61 (PPLP…PTYT) and 70–86 (SPPP…PTYS). 47 tandem repeats follow at residues 70 to 78 (SPPPPYVYS), 79 to 94 (SPPP…VDYK), 95 to 103 (SPPPPYVYS), 104 to 119 (SPPP…VDYK), 120 to 128 (SPPPPYVYN), 129 to 144 (SPPP…VDYK), 145 to 153 (SPPPPYVYS), 154 to 169 (SPPP…VEYK), 170 to 178 (SPPPPYVYS), 179 to 194 (SPPP…VDYK), 195 to 203 (SPPPPYVYS), 204 to 219 (SPPP…VEYK), 220 to 228 (SPPPPYVYS), 229 to 244 (SPPP…VDYK), 245 to 253 (SPPPPYVYS), 254 to 269 (SPPP…VDYK), 270 to 278 (SPPPPYVYS), 279 to 294 (SPPP…VDYK), 295 to 303 (SPPPPYVYS), 304 to 319 (SPPP…VDYK), 320 to 328 (SPPPPYVYS), 329 to 344 (SPPP…VDYK), 345 to 353 (SPPPPYVYS), 354 to 369 (SPPP…VDYK), 370 to 378 (SPPPPYVYS), 379 to 394 (SPPP…VEYK), 395 to 403 (SPPPPYVYS), 404 to 419 (SPPP…VYYK), 420 to 428 (SPPPPYVYS), 429 to 444 (SPPP…VYYK), 445 to 453 (SPPPPYVYS), 454 to 469 (SPPP…VYYK), 470 to 478 (SPPPPYVYS), 479 to 494 (SPPP…VYYK), 495 to 503 (SPPPPYVYS), 504 to 519 (SPPP…VYYK), 520 to 528 (SPPPPYVYS), 529 to 544 (SPPP…VHYK), 545 to 553 (SPPPPYVYS), 554 to 569 (SPPP…VHYK), 570 to 578 (SPPPPYVYN), 579 to 594 (SPPP…VYYK), 595 to 603 (SPPPPYVYS), 604 to 619 (SPPP…VYYK), 620 to 628 (SPPPPYVYS), 629 to 644 (SPPP…VYYK), and 645 to 660 (SPPP…VYYK). The segment at 70 to 628 (SPPPPYVYSS…KSPPPPYVYS (559 aa)) is 23 X 9 AA repeats of S-P-P-P-P-Y-V-Y-[SN]. The tract at residues 79-660 (SPPPPTYSPS…YSPSPKVYYK (582 aa)) is 24 X 16 AA repeats of S-P-P-P-P-[YT]-Y-S-P-S-P-K-V-[DEYH]-Y-K. A disordered region spans residues 715–743 (PPSYYSPSPKVEYKSPPPPSYSPSPKTEY).

This sequence belongs to the extensin family. Extensins contain a characteristic repeat of the pentapeptide Ser-Pro(4). The proline residues are hydroxylated and then O-glycosylated (arabinosylation). In terms of processing, synthetised as soluble proteins which become insolubilised in the cell wall through the intermolecular cross-linking of Tyr on adjacent monomers. Isodityrosine (IDT) stabilizes and makes rigid the part of the polypeptide where IDT functional sites are present. As to expression, predominantly expressed in the roots.

The protein resides in the secreted. Its subcellular location is the primary cell wall. In terms of biological role, structural component which strengthens the primary cell wall. The chain is Extensin-2 from Arabidopsis thaliana (Mouse-ear cress).